The sequence spans 660 residues: DNA mismatch repair protein MutL (660 aa).

Residues Asp-408 to Phe-436 form a disordered region. Positions Glu-425 to Phe-436 are enriched in polar residues.

It belongs to the DNA mismatch repair MutL/HexB family.

Functionally, this protein is involved in the repair of mismatches in DNA. It is required for dam-dependent methyl-directed DNA mismatch repair. May act as a 'molecular matchmaker', a protein that promotes the formation of a stable complex between two or more DNA-binding proteins in an ATP-dependent manner without itself being part of a final effector complex. The sequence is that of DNA mismatch repair protein MutL from Streptococcus uberis (strain ATCC BAA-854 / 0140J).